Consider the following 230-residue polypeptide: MKKAVILLSGGMDSAVVTAIAQSQGFMVHALSIRYGQRHTSELDAAVRIARALNVVAHKVVDVDLRSIGGSALTDDIEIPDAGGEGIPVTYVPARNTIMLSLALGWAEVIGAADIFCGVNAVDYSGYPDCRPQFITAFETLANLATKVGVEGTQLHVHAPLQFLSKAEIVHEGLLHGVDFGLTVSCYRADVDGRACGRCDACKLRAAGFADAGVVDPTRYMELPCSLLLL.

8–18 is an ATP binding site; sequence LSGGMDSAVVT. Positions 186, 196, 199, and 202 each coordinate Zn(2+).

Belongs to the QueC family. Zn(2+) serves as cofactor.

The catalysed reaction is 7-carboxy-7-deazaguanine + NH4(+) + ATP = 7-cyano-7-deazaguanine + ADP + phosphate + H2O + H(+). The protein operates within purine metabolism; 7-cyano-7-deazaguanine biosynthesis. Functionally, catalyzes the ATP-dependent conversion of 7-carboxy-7-deazaguanine (CDG) to 7-cyano-7-deazaguanine (preQ(0)). This Xylella fastidiosa (strain M12) protein is 7-cyano-7-deazaguanine synthase.